A 145-amino-acid chain; its full sequence is Small ribosomal subunit protein uS19 (145 aa).

The protein belongs to the universal ribosomal protein uS19 family. In terms of assembly, component of the small ribosomal subunit.

The protein localises to the cytoplasm. Functionally, component of the small ribosomal subunit. The ribosome is a large ribonucleoprotein complex responsible for the synthesis of proteins in the cell. The sequence is that of Small ribosomal subunit protein uS19 (rps15) from Xenopus laevis (African clawed frog).